The following is a 488-amino-acid chain: Pup--protein ligase (488 aa).

Position 34 (Glu-34) interacts with Mg(2+). Arg-77 contacts ATP. Tyr-79 is a binding site for Mg(2+). Asp-81 (proton acceptor) is an active-site residue. A Mg(2+)-binding site is contributed by Glu-87. ATP-binding residues include Thr-90 and Trp-453.

Belongs to the Pup ligase/Pup deamidase family. Pup-conjugating enzyme subfamily.

It catalyses the reaction ATP + [prokaryotic ubiquitin-like protein]-L-glutamate + [protein]-L-lysine = ADP + phosphate + N(6)-([prokaryotic ubiquitin-like protein]-gamma-L-glutamyl)-[protein]-L-lysine.. It functions in the pathway protein degradation; proteasomal Pup-dependent pathway. The protein operates within protein modification; protein pupylation. In terms of biological role, catalyzes the covalent attachment of the prokaryotic ubiquitin-like protein modifier Pup to the proteasomal substrate proteins, thereby targeting them for proteasomal degradation. This tagging system is termed pupylation. The ligation reaction involves the side-chain carboxylate of the C-terminal glutamate of Pup and the side-chain amino group of a substrate lysine. This is Pup--protein ligase from Bifidobacterium dentium (strain ATCC 27534 / DSM 20436 / JCM 1195 / Bd1).